A 389-amino-acid polypeptide reads, in one-letter code: MELGKSIENQNNVVARLAKKVIETDVANGSNVVFSPMSINVLLSLIAAGSNPVTKEEILSFLMSPSTDHLNAVLAKIADGGTERSDLCLSTAHGVWIDKSSYLKPSFKELLENSYKASCSQVDFATKPVEVIDEVNIWADVHTNGLIKQILSRDCTDTIKEIRNSTLILANAVYFKAAWSRKFDAKLTKDNDFHLLDGNTVKVPFMMSYKDQYLRGYDGFQVLRLPYVEDKRHFSMYIYLPNDKDGLAALLEKISTEPGFLDSHIPLHRTPVDALRIPKLNFSFEFKASEVLKDMGLTSPFTSKGNLTEMVDSPSNGDKLHVSSIIHKACIEVDEEGTEAAAVSVAIMMPQCLMRNPDFVADHPFLFTVREDNSGVILFIGQVLDPSKH.

An RCL region spans residues 337–361 (GTEAAAVSVAIMMPQCLMRNPDFVA).

The protein belongs to the serpin family.

In terms of biological role, probable serine protease inhibitor. The polypeptide is Serpin-Z3 (Arabidopsis thaliana (Mouse-ear cress)).